Consider the following 318-residue polypeptide: Homeobox protein Nkx-2.5 (318 aa).

Positions 137–196 form a DNA-binding region, homeobox; the sequence is RRKPRVLFSQAQVYELERRFKQQRYLSAPERDQLASVLKLTSTQVKIWFQNRRYKCKRQR.

Belongs to the NK-2 homeobox family. In terms of assembly, homodimer (via the homeobox); binds DNA as homodimer. Interacts (via the homeobox) with TBX5 (via the T-box); this complex binds DNA. Interacts with HIPK1 and HIPK2, but not HIPK3. Interacts with the C-terminal zinc finger of GATA4 through its homeobox domain. Also interacts with JARID2 which represses its ability to activate transcription of ANF. Interacts with FBLIM1. Interacts with TBX18. Interacts with histone methyltransferase NSD2 (via HMG box). Interacts with NEDD9. Interacts with TBX1. In terms of tissue distribution, predominantly in the adult and embryonic heart, and to a lesser extent in lingual muscle, spleen and stomach.

The protein localises to the nucleus. Functionally, transcription factor required for the development of the heart and the spleen. During heart development, acts as a transcriptional activator of NPPA/ANF in cooperation with GATA4. May cooperate with TBX2 to negatively modulate expression of NPPA/ANF in the atrioventricular canal. Binds to the core DNA motif of NPPA promoter. Together with PBX1, required for spleen development through a mechanism that involves CDKN2B repression. Positively regulates transcription of genes such as COL3A1 and MMP2, resulting in increased pulmonary endothelial fibrosis in response to hypoxia. The protein is Homeobox protein Nkx-2.5 (Nkx2-5) of Mus musculus (Mouse).